The primary structure comprises 87 residues: Beta-defensin 109 (87 aa).

Residues 1-22 (MRLHLLLLILLLFSILLSPVRG) form the signal peptide. 3 disulfides stabilise this stretch: Cys31–Cys59, Cys38–Cys53, and Cys43–Cys60.

It belongs to the beta-defensin family.

The protein localises to the secreted. Its function is as follows. Has antibacterial activity. The protein is Beta-defensin 109 (DEFB109) of Pan troglodytes (Chimpanzee).